We begin with the raw amino-acid sequence, 397 residues long: Cephalotocin receptor 1 (397 aa).

Residues 1 to 48 lie on the Extracellular side of the membrane; the sequence is MRYITTHPNEISTQIWNNFSSTEIWSNFSAAKNETQPIRRNQDLANAE. Residues Asn-18, Asn-27, and Asn-33 are each glycosylated (N-linked (GlcNAc...) asparagine). Residues 49-69 traverse the membrane as a helical segment; that stretch reads VITLAVVIIITVIGNSIVLIT. Topologically, residues 70–91 are cytoplasmic; the sequence is LFQRRKKLTRMHLFILHLSVTD. The helical transmembrane segment at 92–112 threads the bilayer; it reads LFVAFFNNLPQMIWDITFLFL. The Extracellular portion of the chain corresponds to 113-120; it reads GTDLLCRL. An intrachain disulfide couples Cys-118 to Cys-194. Residues 121–141 form a helical membrane-spanning segment; sequence VTYLQSVAMYASSYVLVATAI. Topologically, residues 142-162 are cytoplasmic; it reads DRYFAICHPLSSHKWTTARVH. The helical transmembrane segment at 163-183 threads the bilayer; sequence VMVFIAWMLSFLFSTPQLFIW. The Extracellular segment spans residues 184–205; the sequence is SMQFSNIGLTCQATFDPEWTLK. A helical membrane pass occupies residues 206–226; that stretch reads FYITWLTVAIWILPTIALTLF. Residues 227–293 lie on the Cytoplasmic side of the membrane; it reads YGMMCFAVWK…RGISRAKVRS (67 aa). Residues 294–314 form a helical membrane-spanning segment; the sequence is VALTLSVVACCFICWSPFFVC. The Extracellular segment spans residues 315–331; it reads QMWAAWDENAPYSGAIY. The chain crosses the membrane as a helical span at residues 332-352; that stretch reads TILLLLSSLNSCTNPWIYMIF. Residues 353-397 are Cytoplasmic-facing; that stretch reads SVFQHRAKTSRFVNDEETTSVTVLSSRNDIRLMSMKKKLEQTARN.

Belongs to the G-protein coupled receptor 1 family. Vasopressin/oxytocin receptor subfamily. Present in brain, buccal ganglion, gastric ganglion, olfactory lube, peduncle lobe, optical lobe, pancreas, the oviduct and the ovary.

The protein localises to the cell membrane. Its function is as follows. Acts as a receptor for cephalotocin. The chain is Cephalotocin receptor 1 from Octopus vulgaris (Common octopus).